The following is a 267-amino-acid chain: Thiamine pyrophosphokinase 1 (267 aa).

The protein belongs to the thiamine pyrophosphokinase family. In terms of tissue distribution, expressed in roots, leaves and flowers.

Its subcellular location is the cytoplasm. The protein resides in the cytosol. It carries out the reaction thiamine + ATP = thiamine diphosphate + AMP + H(+). The protein operates within cofactor biosynthesis; thiamine diphosphate biosynthesis; thiamine diphosphate from thiamine: step 1/1. Its function is as follows. Catalyzes the phosphorylation of thiamine to thiamine pyrophosphate (TPP). TPP is an active cofactor for enzymes involved in glycolysis and energy production. Plant leaves require high levels of TPP for photosynthesis and carbohydrate metabolism. This is Thiamine pyrophosphokinase 1 from Arabidopsis thaliana (Mouse-ear cress).